A 268-amino-acid chain; its full sequence is Fibroblast growth factor 8 (268 aa).

The first 22 residues, 1 to 22, serve as a signal peptide directing secretion; that stretch reads MGSPRSALSCLLLHLLVLCLQA. At Gln23 the chain carries Pyrrolidone carboxylic acid. A disordered region spans residues 29–87; that stretch reads QKRGPGAGNPADTLGQGHEDRPFGQRSRAGKNFTNPAPNYPEEGSKEQRDSVLPKVTQR. An N-linked (GlcNAc...) asparagine glycan is attached at Asn60. Basic and acidic residues predominate over residues 71–80; sequence EGSKEQRDSV. The N-linked (GlcNAc...) asparagine glycan is linked to Asn190.

The protein belongs to the heparin-binding growth factors family. In terms of assembly, monomer. Homodimer. Interacts with FGFR1, FGFR2, FGFR3 and FGFR4. Affinity between fibroblast growth factors (FGFs) and their receptors is increased by heparan sulfate glycosaminoglycans that function as coreceptors. In terms of processing, the N-terminus is blocked. In terms of tissue distribution, absent in normal mammary glands and detected only in adult testis and ovary and in midgestational embryos.

Its subcellular location is the secreted. Its function is as follows. Plays an important role in the regulation of embryonic development, cell proliferation, cell differentiation and cell migration. Required for normal brain, eye, ear and limb development during embryogenesis. Required for normal development of the gonadotropin-releasing hormone (GnRH) neuronal system. Plays a role in neurite outgrowth in hippocampal cells. Cooperates with Wnt-1 in mouse mammary tumor virus-induced murine mammary tumorigenesis. In Mus musculus (Mouse), this protein is Fibroblast growth factor 8 (Fgf8).